The sequence spans 390 residues: Trehalose-phosphate phosphatase (390 aa).

Catalysis depends on Asp150, which acts as the Nucleophile. Positions 150, 152, and 333 each coordinate Mg(2+). 150 to 152 (DFD) is a binding site for substrate.

It belongs to the trehalose phosphatase family. The cofactor is Mg(2+).

The catalysed reaction is alpha,alpha-trehalose 6-phosphate + H2O = alpha,alpha-trehalose + phosphate. It functions in the pathway glycan biosynthesis; trehalose biosynthesis. In terms of biological role, removes the phosphate from trehalose 6-phosphate to produce free trehalose. This is Trehalose-phosphate phosphatase (otsB) from Mycobacterium marinum (strain ATCC BAA-535 / M).